The primary structure comprises 103 residues: uncharacterized protein (103 aa).

This is an uncharacterized protein from Acanthamoeba polyphaga (Amoeba).